Consider the following 426-residue polypeptide: Phosphoribosylamine--glycine ligase (426 aa).

An ATP-grasp domain is found at 109–312 (KEVMEAAGVA…LAGVLNAVAT (204 aa)). 138–193 (LDYFGPMYVVKDDGLAAGKGVVVTADRAEARQHIHLVHAAGNPVLLESFLDGPEVS) contacts ATP. Mg(2+) is bound by residues Glu282 and Asn284.

The protein belongs to the GARS family. Mg(2+) serves as cofactor. Mn(2+) is required as a cofactor.

The enzyme catalyses 5-phospho-beta-D-ribosylamine + glycine + ATP = N(1)-(5-phospho-beta-D-ribosyl)glycinamide + ADP + phosphate + H(+). It functions in the pathway purine metabolism; IMP biosynthesis via de novo pathway; N(1)-(5-phospho-D-ribosyl)glycinamide from 5-phospho-alpha-D-ribose 1-diphosphate: step 2/2. This Corynebacterium ammoniagenes (Brevibacterium ammoniagenes) protein is Phosphoribosylamine--glycine ligase.